The following is a 561-amino-acid chain: Urocanate hydratase (561 aa).

NAD(+) is bound by residues 52–53 (GG), Gln130, 176–178 (GMG), Glu196, Arg201, 242–243 (NA), 263–267 (QTSAH), 273–274 (YL), and Tyr322. Cys410 is an active-site residue. Gly492 contributes to the NAD(+) binding site.

Belongs to the urocanase family. Requires NAD(+) as cofactor.

It localises to the cytoplasm. It carries out the reaction 4-imidazolone-5-propanoate = trans-urocanate + H2O. The protein operates within amino-acid degradation; L-histidine degradation into L-glutamate; N-formimidoyl-L-glutamate from L-histidine: step 2/3. In terms of biological role, catalyzes the conversion of urocanate to 4-imidazolone-5-propionate. The chain is Urocanate hydratase from Citrobacter koseri (strain ATCC BAA-895 / CDC 4225-83 / SGSC4696).